Here is a 312-residue protein sequence, read N- to C-terminus: MSGTNQSSVSEFLLLGLSRQPQQQHLLFVFFLSMYLATVLGNLLIILSVSIDSCLHTPMYFFLSNLSFVDICFSFTTVPKMLANHILETQTISFCGCLTQMYFVFMFVDMDNFLLAVMAYDHFVAVCHPLHYTAKMTHQLCALLVAGLWVVANLNVLLHTLLMAPLSFCADNAITHFFCDVTPLLKLSCSDTHLNEVIILSEGALVMITPFLCILASYMHITCTVLKVPSTKGRWKAFSTCGSHLAVVLLFYSTIIAVYFNPLSSHSAEKDTMATVLYTVVTPMLNPFIYSLRNRYLKGALKKVVGRVVFSV.

The Extracellular segment spans residues 1 to 25 (MSGTNQSSVSEFLLLGLSRQPQQQH). Asn5 carries N-linked (GlcNAc...) asparagine glycosylation. A helical membrane pass occupies residues 26 to 49 (LLFVFFLSMYLATVLGNLLIILSV). At 50 to 57 (SIDSCLHT) the chain is on the cytoplasmic side. A helical membrane pass occupies residues 58–79 (PMYFFLSNLSFVDICFSFTTVP). Residues 80–100 (KMLANHILETQTISFCGCLTQ) lie on the Extracellular side of the membrane. Cys97 and Cys189 are disulfide-bonded. A helical transmembrane segment spans residues 101-120 (MYFVFMFVDMDNFLLAVMAY). Residues 121-139 (DHFVAVCHPLHYTAKMTHQ) are Cytoplasmic-facing. The chain crosses the membrane as a helical span at residues 140–158 (LCALLVAGLWVVANLNVLL). Residues 159–196 (HTLLMAPLSFCADNAITHFFCDVTPLLKLSCSDTHLNE) are Extracellular-facing. A helical membrane pass occupies residues 197–219 (VIILSEGALVMITPFLCILASYM). Over 220–236 (HITCTVLKVPSTKGRWK) the chain is Cytoplasmic. Residues 237-259 (AFSTCGSHLAVVLLFYSTIIAVY) traverse the membrane as a helical segment. The Extracellular portion of the chain corresponds to 260–272 (FNPLSSHSAEKDT). Residues 273–292 (MATVLYTVVTPMLNPFIYSL) form a helical membrane-spanning segment. At 293–312 (RNRYLKGALKKVVGRVVFSV) the chain is on the cytoplasmic side.

The protein belongs to the G-protein coupled receptor 1 family.

The protein localises to the cell membrane. In terms of biological role, odorant receptor. The sequence is that of Olfactory receptor 1F1 (OR1F1) from Homo sapiens (Human).